The sequence spans 904 residues: MYTTTLSVQGMTCTSCVASIQSMLEGVEGIEQFTISLLLERAIAVHDPSIISPDQIAEKIEDCGFDASVISSTEGEHGVMANYLLLSPMQAEQWTKVHNHINELQGVLSVNCSSSPDAAIRVIYDSEITGPRSIMKEILSMGVKCTFQPVDSSTSRILSLQRGSQIRVWKIRFIISISFSLAVMFLPQIFDSCDSMRAAFLVPHYFGICAGHIISLVLSLPVQFGVGRVYYSAAYHALKRGTANMDVLVSLGSTVAFAASIFFMILYSARHADNPAPIFFDTADMLLTFVTLGRYLESKAKGSTSAALSQLLSLAPSSATIIEDNEQIEILADLIERGDLILVKPGEIIPVDGTVVEGSSYVDESSVSGEPVPVHKTIDDELLSGTANGNGRLLVKATKSPRESQLAVIVDLVQRAQISHAPIQQFADRVAGIFVPVIVALSISTFTFWFLFTKYSSKYPSVFDDPMGKFAVCLKLTISVVVVACPCALGLSTPTAVMVGTGVGALNGIIIKGGEILERLNQVDTVVFDKTGTLTVGKLSVTDISIVDNLEELLDIPKNIFWAFVKASESSSEHPIGKAITEKASEFTDVSEIGIESFNAVPGEGVDVVLRWKERTFHALLGNSLLLEHNNVSIPDDFDSKLKLSSSSGLTCVRIAIDGQFVGFLGCMDQVRPDSYQTVSALKQLGKKVCLLTGDQKATARRVAQGLEIDFSDVYAEAVPSQKAEIIQKLKDQKHCVAMVGDGINDSPSLVLADVGIAPINGSGIALESADVILVRKGVLLDTAVSFDLSRVIVKRIKMNLVWACIYNFVMIPIAMGFFLPWGIYLNPMWASAAMMFSSLSVLASSLLLRRWKKPKSLIFSEADDVETESSTNSSVLQKVYTATRSIFGRNKSSNKYQPVANEV.

At M1–R172 the chain is on the cytoplasmic side. The 67-residue stretch at Y2–S68 folds into the HMA domain. Cu(+) is bound by residues C13 and C16. A helical transmembrane segment spans residues F173–C193. Topologically, residues D194 to R197 are lumenal, vesicle. A helical membrane pass occupies residues A198–L218. The Cytoplasmic portion of the chain corresponds to S219–D246. Residues V247–Y267 form a helical membrane-spanning segment. Over S268 to I278 the chain is Lumenal, vesicle. Residues F279–L296 traverse the membrane as a helical segment. At E297–A431 the chain is on the cytoplasmic side. The chain crosses the membrane as a helical span at residues G432–F452. Topologically, residues T453 to K469 are lumenal, vesicle. A helical membrane pass occupies residues F470 to G490. Residues L491–C805 are Cytoplasmic-facing. The active-site 4-aspartylphosphate intermediate is the D529. Mg(2+) is bound by residues D742 and D746. A helical membrane pass occupies residues I806 to L826. Residues N827 to P828 are Lumenal, vesicle-facing. The helical transmembrane segment at M829 to L849 threads the bilayer. Residues R850–V904 lie on the Cytoplasmic side of the membrane.

The protein belongs to the cation transport ATPase (P-type) (TC 3.A.3) family. Type IB subfamily.

The protein resides in the golgi apparatus. It is found in the trans-Golgi network membrane. The catalysed reaction is Cu(+)(in) + ATP + H2O = Cu(+)(out) + ADP + phosphate + H(+). Functionally, probably involved in copper transport and in the regulation of cellular copper level. Retrieves copper from the metallochaperone atx1 and incorporates it into trans-Golgi vesicles. The sequence is that of Copper-transporting ATPase ccc2 (ccc2) from Schizosaccharomyces pombe (strain 972 / ATCC 24843) (Fission yeast).